Here is a 402-residue protein sequence, read N- to C-terminus: Propionate kinase (402 aa).

2 residues coordinate ATP: N11 and K18. Mg(2+) is bound at residue N11. Position 86 (R86) interacts with substrate. The Proton donor/acceptor role is filled by D143. ATP-binding positions include H175, 203 to 207, 278 to 280, and 326 to 330; these read HLGNG, DLR, and GIGEN.

It belongs to the acetokinase family. TdcD subfamily. As to quaternary structure, homodimer. Requires Mg(2+) as cofactor.

The catalysed reaction is propanoate + ATP = propanoyl phosphate + ADP. Its pathway is amino-acid degradation; L-threonine degradation via propanoate pathway; propanoate from L-threonine: step 4/4. In terms of biological role, catalyzes the conversion of propionyl phosphate and ADP to propionate and ATP. This chain is Propionate kinase, found in Escherichia coli O6:H1 (strain CFT073 / ATCC 700928 / UPEC).